A 631-amino-acid polypeptide reads, in one-letter code: Phosphomethylpyrimidine synthase (631 aa).

Substrate is bound by residues Asn239, Met268, Tyr297, His333, 353 to 355, 394 to 397, and Glu433; these read SRG and DGLR. His437 serves as a coordination point for Zn(2+). Tyr460 is a binding site for substrate. His501 is a Zn(2+) binding site. The [4Fe-4S] cluster site is built by Cys581, Cys584, and Cys589.

This sequence belongs to the ThiC family. Homodimer. [4Fe-4S] cluster is required as a cofactor.

The enzyme catalyses 5-amino-1-(5-phospho-beta-D-ribosyl)imidazole + S-adenosyl-L-methionine = 4-amino-2-methyl-5-(phosphooxymethyl)pyrimidine + CO + 5'-deoxyadenosine + formate + L-methionine + 3 H(+). It functions in the pathway cofactor biosynthesis; thiamine diphosphate biosynthesis. Functionally, catalyzes the synthesis of the hydroxymethylpyrimidine phosphate (HMP-P) moiety of thiamine from aminoimidazole ribotide (AIR) in a radical S-adenosyl-L-methionine (SAM)-dependent reaction. In Shigella flexneri serotype 5b (strain 8401), this protein is Phosphomethylpyrimidine synthase.